Reading from the N-terminus, the 394-residue chain is Protein NDRG1 (394 aa).

S2 bears the N-acetylserine mark. A phosphoserine mark is found at S2, S319, and S326. Positions 325–394 are disordered; it reads RSRTASGSSV…AGPKSMEVSC (70 aa). The span at 327-339 shows a compositional bias: polar residues; it reads RTASGSSVTSLEG. At T328 the chain carries Phosphothreonine. A Phosphoserine; by SGK1 modification is found at S330. A phosphoserine mark is found at S332 and S333. A Phosphothreonine modification is found at T335. Position 336 is a phosphoserine (S336). 3 consecutive repeat copies span residues 339-348, 349-358, and 359-368. Positions 339–368 are 3 X 10 AA tandem repeats of G-[PST]-R-S-R-S-H-T-S-E; the sequence is GTRSRSHTSEGPRSRSHTSEGSRSRSHTSE. The residue at position 340 (T340) is a Phosphothreonine. Residue S342 is modified to Phosphoserine. Positions 345–371 are enriched in basic and acidic residues; it reads HTSEGPRSRSHTSEGSRSRSHTSEDAR. T346 is modified (phosphothreonine; by SGK1). A Phosphoserine modification is found at S352. T356 carries the phosphothreonine; by SGK1 modification. S362 and S364 each carry phosphoserine. T366 is modified (phosphothreonine; by SGK1). Over residues 374–386 the composition is skewed to polar residues; sequence ITPNSGATGNNAG. Position 375 is a phosphothreonine (T375).

Belongs to the NDRG family. Interacts with RAB4A (membrane-bound form); the interaction involves NDRG1 in vesicular recycling of CDH1. Interacts with APOA1, APOA2, PRA1 and RTN1. In terms of processing, under stress conditions, phosphorylated in the C-terminal on many serine and threonine residues. Phosphorylated in vitro by PKA. Phosphorylation enhanced by increased intracellular cAMP levels. Homocysteine induces dephosphorylation. Phosphorylation by SGK1 is cell cycle dependent. Widely expressed, with highest levels in kidney followed by brain, pancreas, small intestine, colon and spleen (at protein level). Also detected in heart and preputial gland, and in much smaller quantities in other tissues. Not detected in duodenum and prostate. Highly expressed in Schwann cells.

Its subcellular location is the cytoplasm. It localises to the cytosol. It is found in the cytoskeleton. The protein localises to the microtubule organizing center. The protein resides in the centrosome. Its subcellular location is the nucleus. It localises to the cell membrane. Its function is as follows. Stress-responsive protein involved in hormone responses, cell growth, and differentiation. Acts as a tumor suppressor in many cell types. Necessary but not sufficient for p53/TP53-mediated caspase activation and apoptosis. Required for vesicular recycling of CDH1 and TF. May also function in lipid trafficking. Protects cells from spindle disruption damage. Functions in p53/TP53-dependent mitotic spindle checkpoint. Regulates microtubule dynamics and maintains euploidy. Has a role in cell trafficking notably of the Schwann cell and is necessary for the maintenance and development of the peripheral nerve myelin sheath. The protein is Protein NDRG1 (Ndrg1) of Mus musculus (Mouse).